A 142-amino-acid polypeptide reads, in one-letter code: Transcriptional regulator MraZ (142 aa).

SpoVT-AbrB domains follow at residues 5 to 47 (THTP…PTET) and 76 to 119 (ASDT…DATE).

Belongs to the MraZ family. As to quaternary structure, forms oligomers.

The protein localises to the cytoplasm. The protein resides in the nucleoid. In Cutibacterium acnes (strain DSM 16379 / KPA171202) (Propionibacterium acnes), this protein is Transcriptional regulator MraZ.